Consider the following 208-residue polypeptide: Translation initiation factor 6 (208 aa).

Belongs to the eIF-6 family.

Binds to the 50S ribosomal subunit and prevents its association with the 30S ribosomal subunit to form the 70S initiation complex. This is Translation initiation factor 6 (eif6) from Nanoarchaeum equitans (strain Kin4-M).